We begin with the raw amino-acid sequence, 97 residues long: Aspartyl/glutamyl-tRNA(Asn/Gln) amidotransferase subunit C (97 aa).

Belongs to the GatC family. In terms of assembly, heterotrimer of A, B and C subunits.

The enzyme catalyses L-glutamyl-tRNA(Gln) + L-glutamine + ATP + H2O = L-glutaminyl-tRNA(Gln) + L-glutamate + ADP + phosphate + H(+). It carries out the reaction L-aspartyl-tRNA(Asn) + L-glutamine + ATP + H2O = L-asparaginyl-tRNA(Asn) + L-glutamate + ADP + phosphate + 2 H(+). In terms of biological role, allows the formation of correctly charged Asn-tRNA(Asn) or Gln-tRNA(Gln) through the transamidation of misacylated Asp-tRNA(Asn) or Glu-tRNA(Gln) in organisms which lack either or both of asparaginyl-tRNA or glutaminyl-tRNA synthetases. The reaction takes place in the presence of glutamine and ATP through an activated phospho-Asp-tRNA(Asn) or phospho-Glu-tRNA(Gln). This chain is Aspartyl/glutamyl-tRNA(Asn/Gln) amidotransferase subunit C, found in Listeria monocytogenes serotype 4b (strain CLIP80459).